The chain runs to 426 residues: Chromatin structure-remodeling complex subunit SFH1 (426 aa).

Serine 78 carries the phosphoserine modification. Residues 201–242 (AIMIPITLDIEHMGHTIKDQFLWNYNDDSISPEEFASIYCKD) are interaction with STH1.

It belongs to the SNF5 family. In terms of assembly, interacts directly with STH1. Component of the two forms of the RSC complex composed of at least either RSC1 or RSC2, and ARP7, ARP9, LDB7, NPL6, RSC3, RSC30, RSC4, RSC58, RSC6, RSC8, RSC9, SFH1, STH1, HTL1 and probably RTT102. The complexes interact with histone and histone variant components of centromeric chromatin. Phosphorylated in the G1 phase.

It is found in the nucleus. In terms of biological role, component of the chromatin structure-remodeling complex (RSC), which is involved in transcription regulation and nucleosome positioning. RSC is responsible for the transfer of a histone octamer from a nucleosome core particle to naked DNA. The reaction requires ATP and involves an activated RSC-nucleosome intermediate. Remodeling reaction also involves DNA translocation, DNA twist and conformational change. As a reconfigurer of centromeric and flanking nucleosomes, RSC complex is required both for proper kinetochore function in chromosome segregation and, via a PKC1-dependent signaling pathway, for organization of the cellular cytoskeleton. This subunit is essential for mitotic growth and required for cell cycle progression. This chain is Chromatin structure-remodeling complex subunit SFH1 (SFH1), found in Saccharomyces cerevisiae (strain ATCC 204508 / S288c) (Baker's yeast).